A 233-amino-acid chain; its full sequence is Superoxide dismutase [Mn] 3.3, mitochondrial (233 aa).

Residues 1-29 (MALRTLASKNALSFALGGAARPSAESARG) constitute a mitochondrion transit peptide. His57, His105, Asp194, and His198 together coordinate Mn(2+).

Belongs to the iron/manganese superoxide dismutase family. As to quaternary structure, homotetramer. Mn(2+) serves as cofactor. In terms of tissue distribution, predominantly expressed in the embryo late in embryogenesis.

The protein resides in the mitochondrion matrix. It catalyses the reaction 2 superoxide + 2 H(+) = H2O2 + O2. Its function is as follows. Destroys superoxide anion radicals which are normally produced within the cells and which are toxic to biological systems. The protein is Superoxide dismutase [Mn] 3.3, mitochondrial (SODA.2) of Zea mays (Maize).